The chain runs to 243 residues: uncharacterized protein (243 aa).

The region spanning R26–L204 is the VWFA domain. The segment at R222–K243 is disordered. Positions P231–K243 are enriched in basic residues.

This is an uncharacterized protein from Bacillus subtilis (strain 168).